Consider the following 475-residue polypeptide: Ribulose bisphosphate carboxylase large chain (475 aa).

A propeptide spanning residues 1-2 (MS) is cleaved from the precursor. Pro-3 bears the N-acetylproline mark. Residue Lys-14 is modified to N6,N6,N6-trimethyllysine. Asn-123 and Thr-173 together coordinate substrate. Lys-175 acts as the Proton acceptor in catalysis. Lys-177 contributes to the substrate binding site. Mg(2+) contacts are provided by Lys-201, Asp-203, and Glu-204. Lys-201 is subject to N6-carboxylysine. The Proton acceptor role is filled by His-294. Residues Arg-295, His-327, and Ser-379 each contribute to the substrate site.

This sequence belongs to the RuBisCO large chain family. Type I subfamily. As to quaternary structure, heterohexadecamer of 8 large chains and 8 small chains; disulfide-linked. The disulfide link is formed within the large subunit homodimers. It depends on Mg(2+) as a cofactor. Post-translationally, the disulfide bond which can form in the large chain dimeric partners within the hexadecamer appears to be associated with oxidative stress and protein turnover.

It is found in the plastid. It localises to the chloroplast. It carries out the reaction 2 (2R)-3-phosphoglycerate + 2 H(+) = D-ribulose 1,5-bisphosphate + CO2 + H2O. The enzyme catalyses D-ribulose 1,5-bisphosphate + O2 = 2-phosphoglycolate + (2R)-3-phosphoglycerate + 2 H(+). Functionally, ruBisCO catalyzes two reactions: the carboxylation of D-ribulose 1,5-bisphosphate, the primary event in carbon dioxide fixation, as well as the oxidative fragmentation of the pentose substrate in the photorespiration process. Both reactions occur simultaneously and in competition at the same active site. The sequence is that of Ribulose bisphosphate carboxylase large chain from Stellaria media (Common chickweed).